The chain runs to 264 residues: tRNA pseudouridine synthase A (264 aa).

The active-site Nucleophile is the D51. Residue Y109 coordinates substrate.

This sequence belongs to the tRNA pseudouridine synthase TruA family. As to quaternary structure, homodimer.

The catalysed reaction is uridine(38/39/40) in tRNA = pseudouridine(38/39/40) in tRNA. Formation of pseudouridine at positions 38, 39 and 40 in the anticodon stem and loop of transfer RNAs. The chain is tRNA pseudouridine synthase A from Vibrio cholerae serotype O1 (strain ATCC 39541 / Classical Ogawa 395 / O395).